Here is a 987-residue protein sequence, read N- to C-terminus: Pentatricopeptide repeat-containing protein At1g06710, mitochondrial (987 aa).

Residues 1–42 (MNKTVVRCLLSRSHHPLIHFSTNLSLLHRVFTCSRYLTARFM) constitute a mitochondrion transit peptide. 22 PPR repeats span residues 164-198 (TAPV…DKEV), 199-233 (FGEF…RFRP), 234-268 (SRST…NLRM), 269-299 (DGFT…ENFV), 301-335 (DTVF…SCLP), 336-370 (NVVT…GCYP), 371-405 (SPKI…GHMP), 406-446 (GYVV…GVVL), 447-481 (NKIN…GFIP), 482-516 (DTST…GLVA), 517-551 (DVYT…GCTP), 552-586 (NVVT…GCLP), 587-621 (NIVT…KDVP), 638-672 (NVVT…GCEP), 673-707 (NQIV…GFPA), 708-742 (TLYT…SCAP), 743-777 (NVVI…GCQP), 778-812 (NVVT…GVAP), 813-847 (NYVT…HWPT), 881-915 (FLSV…SATL), 918-952 (YSST…GVIP), and 953-987 (EMQS…VCPL).

Belongs to the PPR family. P subfamily.

It is found in the mitochondrion. This is Pentatricopeptide repeat-containing protein At1g06710, mitochondrial from Arabidopsis thaliana (Mouse-ear cress).